We begin with the raw amino-acid sequence, 453 residues long: DNA repair protein RadA (453 aa).

The segment at 10 to 27 adopts a C4-type zinc-finger fold; that stretch reads CTECGATFPKWAGQCADC. 96 to 103 provides a ligand contact to ATP; that stretch reads GDPGIGKS. Positions 252-256 match the RadA KNRFG motif motif; the sequence is KNRFG. The segment at 351-453 is lon-protease-like; sequence DVFLNVVGGV…LEQALDALFE (103 aa).

This sequence belongs to the RecA family. RadA subfamily.

DNA-dependent ATPase involved in processing of recombination intermediates, plays a role in repairing DNA breaks. Stimulates the branch migration of RecA-mediated strand transfer reactions, allowing the 3' invading strand to extend heteroduplex DNA faster. Binds ssDNA in the presence of ADP but not other nucleotides, has ATPase activity that is stimulated by ssDNA and various branched DNA structures, but inhibited by SSB. Does not have RecA's homology-searching function. This chain is DNA repair protein RadA, found in Pseudomonas aeruginosa (strain ATCC 15692 / DSM 22644 / CIP 104116 / JCM 14847 / LMG 12228 / 1C / PRS 101 / PAO1).